The primary structure comprises 859 residues: Glucans biosynthesis glucosyltransferase H (859 aa).

Helical transmembrane passes span 144-166 (YILLILMLGQTIVAGSYMKGILP), 200-222 (LLLFGILFCWVSAGFWTALMGFL), 523-545 (VMSYLSAPLWFFFLVLSTALLAV), 573-595 (VALFSTTIVLLFLPKLLSVILIW), 608-630 (VTVSMLLEMLFSVLLAPVRMLFH), and 684-706 (SFLWWLAPIVVSLMLSIPVSVIS).

Belongs to the glycosyltransferase 2 family. OpgH subfamily.

The protein localises to the cell inner membrane. Its pathway is glycan metabolism; osmoregulated periplasmic glucan (OPG) biosynthesis. Involved in the biosynthesis of osmoregulated periplasmic glucans (OPGs). The polypeptide is Glucans biosynthesis glucosyltransferase H (Pseudomonas syringae pv. tomato (strain ATCC BAA-871 / DC3000)).